A 205-amino-acid chain; its full sequence is High frequency lysogenization protein HflD homolog (205 aa).

This sequence belongs to the HflD family.

Its subcellular location is the cytoplasm. The protein localises to the cell inner membrane. The polypeptide is High frequency lysogenization protein HflD homolog (Shewanella piezotolerans (strain WP3 / JCM 13877)).